We begin with the raw amino-acid sequence, 1111 residues long: Cell death abnormality protein 1 (1111 aa).

The signal sequence occupies residues 1–18 (MRLILLVLLATWQVVVDT). The Extracellular portion of the chain corresponds to 19–910 (RAPTFPDKLT…NGAGRSTGLT (892 aa)). The EMI domain maps to 41 to 113 (GDHVCTVKTI…QCCDGYYQTK (73 aa)). Disulfide bonds link C45–C106, C71–C80, C105–C117, C121–C130, C125–C136, C138–C147, C160–C172, C166–C179, C181–C190, C203–C215, C209–C221, C223–C232, C245–C257, C251–C264, and C266–C275. N66 carries N-linked (GlcNAc...) asparagine glycosylation. EGF-like domains are found at residues 118–148 (LPDCNPPCKKGKCIEPGKCECDPGYGGKYCA), 156–191 (WGLGCSKSCDCENGANCDPELGTCICTSGFQGERCE), 199–233 (WGPNCVKSCPCQNGGKCNKEGKCVCSDGWGGEFCL), and 241–276 (FGAECKFECNCQNGATCDNTNGKCICKSGYHGALCE). N-linked (GlcNAc...) asparagine glycosylation is found at N333 and N345. One can recognise an EGF-like 5 domain in the interval 421–458 (YGPNCEKQAMCDWNHASECNPETGSCVCKPGRTGKNCS). Cystine bridges form between C425-C439, C431-C446, and C448-C457. A glycan (N-linked (GlcNAc...) asparagine) is linked at N456. The stretch at 629–680 (DQKCDPNTFGFLCQETVTPSPCASTDPKNGVCLSCPPGSSGIHCEHNCPAGS) is one FU repeat. An EGF-like 6 domain is found at 681-716 (YGDGCQQVCSCADGHGCDPTTGECICEPGYHGKTCS). Cystine bridges form between C685–C697, C691–C704, and C706–C715. A helical membrane pass occupies residues 911–931 (WFFVLLIVALCGGLGLIALFY). Residues 931 to 1007 (YRNKYQKEKD…EEELENKKIH (77 aa)) are interaction with trim-21. The Cytoplasmic portion of the chain corresponds to 932–1111 (RNKYQKEKDP…KKRAQDNLYT (180 aa)). Disordered regions lie at residues 940-993 (DPDM…PNGL) and 1006-1111 (IHGR…NLYT). Positions 962-965 (NPLY) match the NPXY motif. Positions 963 to 980 (PLYSRQSVFPDSDAFSSE) are enriched in polar residues. Phosphotyrosine; by SRC is present on Y1019. Positions 1019–1022 (YASL) match the YXXL motif. Positions 1030–1039 (SSSSASASAS) are enriched in low complexity. Residues 1068–1083 (NSISPAHAVTTSNHNE) show a composition bias toward polar residues.

In terms of assembly, interacts (via C-terminus) with ced-6 (via PTB domain). Interacts with nck-1; the interaction is required for ced-1 degradation through the proteasome pathway. Interacts with V-ATPase vha-10. In terms of processing, phosphorylation of Tyr-1019, within the YXXL motif, by src-1 is thought to initiate phagosomal formation. 'Lys-48'-linked polyubiquitination by trim-21 leads to proteasomal degradation. Expressed in engulfing cells and syncytium hypodermal cells. Ced-7 is necessary for clustering around cell corpses prior to engulfment.

It localises to the cell membrane. Its subcellular location is the cytoplasmic vesicle. The protein localises to the phagosome membrane. In terms of biological role, involved in programmed cell death, also called apoptosis, in both somatic and germ cells. Acts by recruiting ced-6 to phagosomes which enables actin-dependent cytoskeletal reorganization and subsequent engulfment of the apoptotic cell corpse. Has a role in the association of ppk-3 and rab-7 with the phagosomal surface which is necessary for the incorporation of lysosomes to phagosomes during phagosome maturation. Activates the expression of unfolded protein response genes, which are involved in the immune response to live bacteria. The sequence is that of Cell death abnormality protein 1 from Caenorhabditis elegans.